Here is a 643-residue protein sequence, read N- to C-terminus: Phosphomethylpyrimidine synthase (643 aa).

Residues Asn248, Met277, Tyr306, His342, Ser362–Gly364, Asp403–Arg406, and Glu442 contribute to the substrate site. Zn(2+) is bound at residue His446. Tyr469 is a binding site for substrate. Zn(2+) is bound at residue His510. 3 residues coordinate [4Fe-4S] cluster: Cys590, Cys593, and Cys598.

Belongs to the ThiC family. As to quaternary structure, homodimer. It depends on [4Fe-4S] cluster as a cofactor.

The enzyme catalyses 5-amino-1-(5-phospho-beta-D-ribosyl)imidazole + S-adenosyl-L-methionine = 4-amino-2-methyl-5-(phosphooxymethyl)pyrimidine + CO + 5'-deoxyadenosine + formate + L-methionine + 3 H(+). The protein operates within cofactor biosynthesis; thiamine diphosphate biosynthesis. Catalyzes the synthesis of the hydroxymethylpyrimidine phosphate (HMP-P) moiety of thiamine from aminoimidazole ribotide (AIR) in a radical S-adenosyl-L-methionine (SAM)-dependent reaction. This Burkholderia orbicola (strain MC0-3) protein is Phosphomethylpyrimidine synthase.